A 336-amino-acid chain; its full sequence is Protein SphX (336 aa).

An N-terminal signal peptide occupies residues 1 to 27; sequence MFDLSRLSRGIVPMALLLLGISACTPS.

Belongs to the PstS family.

Functionally, may be involved in the system for phosphate transport across the cytoplasmic membrane. In Synechocystis sp. (strain ATCC 27184 / PCC 6803 / Kazusa), this protein is Protein SphX (sphX).